A 534-amino-acid polypeptide reads, in one-letter code: Replication factor C large subunit (534 aa).

45 to 52 (GPPGIGKT) contributes to the ATP binding site. Residues 444-463 (KNKKEIKVKTKKDTVEDSSK) show a composition bias toward basic and acidic residues. The segment at 444-534 (KNKKEIKVKT…KSRQTTLFDF (91 aa)) is disordered. Over residues 488 to 510 (SSNSTTKNKTESPKNSSKTSSKT) the composition is skewed to low complexity. The span at 517-527 (TSKKNNKKKSR) shows a compositional bias: basic residues.

Belongs to the activator 1 small subunits family. RfcL subfamily. Heteromultimer composed of small subunits (RfcS) and large subunits (RfcL).

Part of the RFC clamp loader complex which loads the PCNA sliding clamp onto DNA. The protein is Replication factor C large subunit of Methanosphaera stadtmanae (strain ATCC 43021 / DSM 3091 / JCM 11832 / MCB-3).